A 255-amino-acid chain; its full sequence is uncharacterized protein (255 aa).

N-linked (GlcNAc...) asparagine; by host glycans are attached at residues N16 and N58. 2 helical membrane-spanning segments follow: residues 72 to 92 and 104 to 124; these read LIYS…TIYY and LWYI…SHIC.

The protein localises to the membrane. This is an uncharacterized protein from Acanthamoeba polyphaga (Amoeba).